Here is a 602-residue protein sequence, read N- to C-terminus: Elongation factor 4 (602 aa).

In terms of domain architecture, tr-type G spans 7–188; the sequence is ENIRNFSIIA…AIVELIPPPK (182 aa). GTP contacts are provided by residues 19–24 and 135–138; these read DHGKST and NKID.

The protein belongs to the TRAFAC class translation factor GTPase superfamily. Classic translation factor GTPase family. LepA subfamily.

Its subcellular location is the cell inner membrane. The catalysed reaction is GTP + H2O = GDP + phosphate + H(+). Its function is as follows. Required for accurate and efficient protein synthesis under certain stress conditions. May act as a fidelity factor of the translation reaction, by catalyzing a one-codon backward translocation of tRNAs on improperly translocated ribosomes. Back-translocation proceeds from a post-translocation (POST) complex to a pre-translocation (PRE) complex, thus giving elongation factor G a second chance to translocate the tRNAs correctly. Binds to ribosomes in a GTP-dependent manner. The chain is Elongation factor 4 from Chlamydia abortus (strain DSM 27085 / S26/3) (Chlamydophila abortus).